Here is a 390-residue protein sequence, read N- to C-terminus: Chorismate synthase 1 (390 aa).

Positions 39 and 45 each coordinate NADP(+). Residues 95–117 (EQEEKEMKRKVTKPRPGHADLNG) form a disordered region. FMN is bound by residues 132 to 134 (RSS), 253 to 254 (NA), G298, 313 to 317 (KPIPT), and R339.

Belongs to the chorismate synthase family. Homotetramer. FMNH2 serves as cofactor.

It carries out the reaction 5-O-(1-carboxyvinyl)-3-phosphoshikimate = chorismate + phosphate. The protein operates within metabolic intermediate biosynthesis; chorismate biosynthesis; chorismate from D-erythrose 4-phosphate and phosphoenolpyruvate: step 7/7. Functionally, catalyzes the anti-1,4-elimination of the C-3 phosphate and the C-6 proR hydrogen from 5-enolpyruvylshikimate-3-phosphate (EPSP) to yield chorismate, which is the branch point compound that serves as the starting substrate for the three terminal pathways of aromatic amino acid biosynthesis. This reaction introduces a second double bond into the aromatic ring system. The sequence is that of Chorismate synthase 1 from Bacillus cereus (strain ZK / E33L).